The following is a 252-amino-acid chain: MFKVVICDDERIIREGLKQIIPWGDYHFNTIYTAKDGVEALSLIQQHQPELVITDIRMPRKNGVDLLNDIAHLDCNVIILSSYDDFEYMKAGIQHHVLDYLLKPVDHAQLEVILGRLVRTLLEQQSQNGRSLAPCHDAFQPLLKVEYDDYYVNQIVDQIKQSYQTKVTVSDLIQHIDVSESYAMRTFKDHVGITIVDYLNRYRILQSLQLLDRHYKHYEIADKVGFSEYKMFSYHFKKYLQMAPSDYCKQAK.

The 116-residue stretch at 3–118 (KVVICDDERI…QLEVILGRLV (116 aa)) folds into the Response regulatory domain. Asp55 carries the 4-aspartylphosphate modification. The HTH araC/xylS-type domain occupies 153-250 (NQIVDQIKQS…QMAPSDYCKQ (98 aa)). 2 consecutive DNA-binding regions (H-T-H motif) follow at residues 170 to 191 (SDLIQHIDVSESYAMRTFKDHV) and 217 to 240 (HYEIADKVGFSEYKMFSYHFKKYL).

Post-translationally, phosphorylated by HptS.

The protein resides in the cytoplasm. In terms of biological role, member of the two-component regulatory system HptS/HptR that regulates genes involved in hexose phosphate transport system in response to changes in extracellular phosphate sources. Activates uhpT expression to facilitate glucose-6-phosphate/G6P utilization by directly binding to its promoter. Antagonizes CcpA-dependent transcription of a subset of CcpA-regulated genes involved in antibiotic susceptibility. The polypeptide is Transcriptional regulatory protein HptR (hptR) (Staphylococcus aureus (strain bovine RF122 / ET3-1)).